Consider the following 557-residue polypeptide: Low affinity inorganic phosphate transporter 8 (557 aa).

The Cytoplasmic portion of the chain corresponds to 1-20 (MATSHGVLRSLDNAKTQSYH). Residues 21–41 (YLAIVIAGMGFFTDAYDLFCI) form a helical membrane-spanning segment. Residues 42–70 (TAVTKLIGRLYYSDPTNHSPGILPTNVNN) are Extracellular-facing. Residues 71–91 (AITGVALCGTLAGQLFFGWLG) traverse the membrane as a helical segment. Over 92 to 98 (DKLGRKK) the chain is Cytoplasmic. The helical transmembrane segment at 99 to 119 (VYGITLTTMVGFALLSGLSFG) threads the bilayer. At 120–130 (STPKTVVTSLC) the chain is on the extracellular side. The chain crosses the membrane as a helical span at residues 131–151 (FFRFWLGFGIGGDYPLSAVIM). At 152-162 (SEYANQKTRGS) the chain is on the cytoplasmic side. The helical transmembrane segment at 163 to 183 (FIAAVFAMQGVGILVAGGVAM) threads the bilayer. The Extracellular portion of the chain corresponds to 184-210 (FVSKLFLLYFPAPDFETDAVLSTQPEG). A helical membrane pass occupies residues 211-231 (DFVWRIVLMFGAVPAALTYYW). The Cytoplasmic portion of the chain corresponds to 232–294 (RMKMPETARY…LFSSEFLNRH (63 aa)). A helical membrane pass occupies residues 295-315 (GLHLLGTTSTWFLLDIAFYSL). The Extracellular portion of the chain corresponds to 316–346 (QLTQKDIYPTSGLVYKASKMNAIEEVFQLSR). A helical transmembrane segment spans residues 347-367 (AMFAVALIATVPGYWCTVFLI). The Cytoplasmic portion of the chain corresponds to 368–369 (EK). The helical transmembrane segment at 370-390 (IGRFRIQLIGFLVMSVCMWFL) threads the bilayer. The Extracellular portion of the chain corresponds to 391 to 414 (GHNYRSFRGEESACKNGSKYSFCN). The N-linked (GlcNAc...) asparagine glycan is linked to asparagine 406. A helical transmembrane segment spans residues 415–435 (GNPVMFAILFGLTLFFANFGP). Topologically, residues 436 to 457 (NSTTFIVPAELFPARLRSTCHG) are cytoplasmic. A helical membrane pass occupies residues 458–478 (ISAAAGKSGAIVGAFGVQSYI). Topologically, residues 479 to 490 (GNSHDKSKGTKQ) are extracellular. Residues 491–511 (AIMALAVVNLLGFFFTFLVPE) traverse the membrane as a helical segment. Over 512–557 (TQGRSLEEISGEEKDFQGNNADEEISGERNGTRNASVDKSPETSMV) the chain is Cytoplasmic. The tract at residues 519–557 (EISGEEKDFQGNNADEEISGERNGTRNASVDKSPETSMV) is disordered. Polar residues predominate over residues 543–557 (TRNASVDKSPETSMV).

Belongs to the major facilitator superfamily. Phosphate:H(+) symporter (TC 2.A.1.9) family.

The protein localises to the cell membrane. It carries out the reaction phosphate(in) + H(+)(in) = phosphate(out) + H(+)(out). Functionally, low-affinity transporter for external inorganic phosphate (Pi) that may be involved in the acquisition of phosphate released by arbuscular mycorrhizal (AM) fungi (e.g. Glomus versiforme and G.intraradices) during AM symbiosis; not required for mycorrhizal arbuscule development. The protein is Low affinity inorganic phosphate transporter 8 of Medicago truncatula (Barrel medic).